Reading from the N-terminus, the 67-residue chain is Sec-independent protein translocase protein TatA (67 aa).

The helical transmembrane segment at 1–21 threads the bilayer; that stretch reads MFGLGGQELVLILLIVLLLFG.

This sequence belongs to the TatA/E family. As to quaternary structure, forms a complex with TatC.

The protein localises to the cell inner membrane. In terms of biological role, part of the twin-arginine translocation (Tat) system that transports large folded proteins containing a characteristic twin-arginine motif in their signal peptide across membranes. TatA could form the protein-conducting channel of the Tat system. This chain is Sec-independent protein translocase protein TatA, found in Chlorobaculum tepidum (strain ATCC 49652 / DSM 12025 / NBRC 103806 / TLS) (Chlorobium tepidum).